We begin with the raw amino-acid sequence, 205 residues long: Small ribosomal subunit protein uS4 (205 aa).

The tract at residues 26–47 is disordered; sequence PVNKREYGPGQHGQRRKQKPSD. An S4 RNA-binding domain is found at 94–154; sequence RRLDAVVYRL…EKSKHLAIVL (61 aa).

This sequence belongs to the universal ribosomal protein uS4 family. In terms of assembly, part of the 30S ribosomal subunit. Contacts protein S5. The interaction surface between S4 and S5 is involved in control of translational fidelity.

In terms of biological role, one of the primary rRNA binding proteins, it binds directly to 16S rRNA where it nucleates assembly of the body of the 30S subunit. Its function is as follows. With S5 and S12 plays an important role in translational accuracy. The protein is Small ribosomal subunit protein uS4 of Gluconacetobacter diazotrophicus (strain ATCC 49037 / DSM 5601 / CCUG 37298 / CIP 103539 / LMG 7603 / PAl5).